Here is a 234-residue protein sequence, read N- to C-terminus: Octanoyltransferase (234 aa).

A BPL/LPL catalytic domain is found at 50 to 234 (GEAPELVWLL…AFEQVFGPTR (185 aa)). Substrate contacts are provided by residues 88-95 (RGGQITYH), 163-165 (AIG), and 176-178 (GIA). Cys-194 serves as the catalytic Acyl-thioester intermediate.

Belongs to the LipB family.

It localises to the cytoplasm. It carries out the reaction octanoyl-[ACP] + L-lysyl-[protein] = N(6)-octanoyl-L-lysyl-[protein] + holo-[ACP] + H(+). It participates in protein modification; protein lipoylation via endogenous pathway; protein N(6)-(lipoyl)lysine from octanoyl-[acyl-carrier-protein]: step 1/2. Catalyzes the transfer of endogenously produced octanoic acid from octanoyl-acyl-carrier-protein onto the lipoyl domains of lipoate-dependent enzymes. Lipoyl-ACP can also act as a substrate although octanoyl-ACP is likely to be the physiological substrate. This Rhodopseudomonas palustris (strain BisA53) protein is Octanoyltransferase.